The chain runs to 390 residues: Transforming growth factor beta-1 proprotein (390 aa).

A signal peptide spans 1-29 (MPPSGLRLLPLLLPLLWLLVLTPGRPAAG). Residues 30–74 (LSTCKTIDMELVKRKRIEAIRGQILSKLRLASPPSQGEVPPGPLP) are straightjacket domain. Residues 75 to 271 (EAVLALYNST…ATPLERAQHL (197 aa)) are arm domain. N-linked (GlcNAc...) asparagine glycans are attached at residues N82, N136, and N176. Positions 226 to 252 (DSRDNTLQVDINGLSSSRRGDLATIHG) are bowtie tail. A Cell attachment site motif is present at residues 244–246 (RGD). Disulfide bonds link C285–C294, C293–C356, C322–C387, and C326–C389.

It belongs to the TGF-beta family. In terms of assembly, homodimer; disulfide-linked. Interacts with the serine proteases, HTRA1 and HTRA3: the interaction with either inhibits TGFB1-mediated signaling and the HTRA protease activity is required for this inhibition. May interact with THSD4; this interaction may lead to sequestration by FBN1 microfibril assembly and attenuation of TGFB signaling. Interacts with CD109, DPT and ASPN. Interacts with EFEMP2. Interacts with TSKU; the interaction contributes to regulation of the hair cycle. Interacts with TGFBR3. Homodimer; disulfide-linked. Interacts with transforming growth factor beta-1 (TGF-beta-1) chain; interaction is non-covalent and maintains TGF-beta-1 in a latent state; each latency-associated peptide (LAP) monomer interacts with TGF-beta-1 in the other monomer. Interacts with LTBP1; leading to regulation of TGF-beta-1 activation. Interacts with LRRC32/GARP; leading to regulation of TGF-beta-1 activation on the surface of activated regulatory T-cells (Tregs). Interacts with LRRC33/NRROS; leading to regulation of TGF-beta-1 activation in macrophages and microglia. Interacts (via cell attachment site) with integrins ITGAV and ITGB6 (ITGAV:ITGB6), leading to release of the active TGF-beta-1. Interacts with NREP; the interaction results in a decrease in TGFB1 autoinduction. Interacts with HSP90AB1; inhibits latent TGFB1 activation. As to quaternary structure, homodimer; disulfide-linked. Interacts with TGF-beta receptors (TGFBR1 and TGFBR2), leading to signal transduction. In terms of processing, transforming growth factor beta-1 proprotein: The precursor proprotein is cleaved in the Golgi apparatus by FURIN to form Transforming growth factor beta-1 (TGF-beta-1) and Latency-associated peptide (LAP) chains, which remain non-covalently linked, rendering TGF-beta-1 inactive. Post-translationally, N-glycosylated. Deglycosylation leads to activation of Transforming growth factor beta-1 (TGF-beta-1); mechanisms triggering deglycosylation-driven activation of TGF-beta-1 are however unclear.

The protein localises to the secreted. It is found in the extracellular space. Its subcellular location is the extracellular matrix. In terms of biological role, transforming growth factor beta-1 proprotein: Precursor of the Latency-associated peptide (LAP) and Transforming growth factor beta-1 (TGF-beta-1) chains, which constitute the regulatory and active subunit of TGF-beta-1, respectively. Its function is as follows. Required to maintain the Transforming growth factor beta-1 (TGF-beta-1) chain in a latent state during storage in extracellular matrix. Associates non-covalently with TGF-beta-1 and regulates its activation via interaction with 'milieu molecules', such as LTBP1, LRRC32/GARP and LRRC33/NRROS, that control activation of TGF-beta-1. Interaction with LRRC33/NRROS regulates activation of TGF-beta-1 in macrophages and microglia. Interaction with LRRC32/GARP controls activation of TGF-beta-1 on the surface of activated regulatory T-cells (Tregs). Interaction with integrins (ITGAV:ITGB6 or ITGAV:ITGB8) results in distortion of the Latency-associated peptide chain and subsequent release of the active TGF-beta-1. Multifunctional protein that regulates the growth and differentiation of various cell types and is involved in various processes, such as normal development, immune function, microglia function and responses to neurodegeneration. Activation into mature form follows different steps: following cleavage of the proprotein in the Golgi apparatus, Latency-associated peptide (LAP) and Transforming growth factor beta-1 (TGF-beta-1) chains remain non-covalently linked rendering TGF-beta-1 inactive during storage in extracellular matrix. At the same time, LAP chain interacts with 'milieu molecules', such as LTBP1, LRRC32/GARP and LRRC33/NRROS that control activation of TGF-beta-1 and maintain it in a latent state during storage in extracellular milieus. TGF-beta-1 is released from LAP by integrins (ITGAV:ITGB6 or ITGAV:ITGB8): integrin-binding to LAP stabilizes an alternative conformation of the LAP bowtie tail and results in distortion of the LAP chain and subsequent release of the active TGF-beta-1. Once activated following release of LAP, TGF-beta-1 acts by binding to TGF-beta receptors (TGFBR1 and TGFBR2), which transduce signal. While expressed by many cells types, TGF-beta-1 only has a very localized range of action within cell environment thanks to fine regulation of its activation by Latency-associated peptide chain (LAP) and 'milieu molecules'. Plays an important role in bone remodeling: acts as a potent stimulator of osteoblastic bone formation, causing chemotaxis, proliferation and differentiation in committed osteoblasts. Can promote either T-helper 17 cells (Th17) or regulatory T-cells (Treg) lineage differentiation in a concentration-dependent manner. At high concentrations, leads to FOXP3-mediated suppression of RORC and down-regulation of IL-17 expression, favoring Treg cell development. At low concentrations in concert with IL-6 and IL-21, leads to expression of the IL-17 and IL-23 receptors, favoring differentiation to Th17 cells. Stimulates sustained production of collagen through the activation of CREB3L1 by regulated intramembrane proteolysis (RIP). Mediates SMAD2/3 activation by inducing its phosphorylation and subsequent translocation to the nucleus. Positively regulates odontoblastic differentiation in dental papilla cells, via promotion of IPO7-mediated translocation of phosphorylated SMAD2 to the nucleus and subsequent transcription of target genes. Can induce epithelial-to-mesenchymal transition (EMT) and cell migration in various cell types. This Mustela putorius furo (European domestic ferret) protein is Transforming growth factor beta-1 proprotein (TGFB1).